The sequence spans 871 residues: DNA mismatch repair protein MutS (871 aa).

ATP is bound at residue 630–637; it reads GPNMGGKS. Residues 830 to 849 form a disordered region; the sequence is KEEPESKSASPVEAALAGIN.

The protein belongs to the DNA mismatch repair MutS family.

In terms of biological role, this protein is involved in the repair of mismatches in DNA. It is possible that it carries out the mismatch recognition step. This protein has a weak ATPase activity. The chain is DNA mismatch repair protein MutS from Verminephrobacter eiseniae (strain EF01-2).